The primary structure comprises 230 residues: Large ribosomal subunit protein uL1 (230 aa).

This sequence belongs to the universal ribosomal protein uL1 family. Part of the 50S ribosomal subunit.

Its function is as follows. Binds directly to 23S rRNA. The L1 stalk is quite mobile in the ribosome, and is involved in E site tRNA release. Protein L1 is also a translational repressor protein, it controls the translation of the L11 operon by binding to its mRNA. In Oenococcus oeni (strain ATCC BAA-331 / PSU-1), this protein is Large ribosomal subunit protein uL1.